The following is a 185-amino-acid chain: Translation initiation factor IF-3 (185 aa).

This sequence belongs to the IF-3 family. In terms of assembly, monomer.

The protein localises to the cytoplasm. IF-3 binds to the 30S ribosomal subunit and shifts the equilibrium between 70S ribosomes and their 50S and 30S subunits in favor of the free subunits, thus enhancing the availability of 30S subunits on which protein synthesis initiation begins. The polypeptide is Translation initiation factor IF-3 (Coxiella burnetii (strain RSA 493 / Nine Mile phase I)).